We begin with the raw amino-acid sequence, 1280 residues long: E3 ubiquitin-protein ligase RKP (1280 aa).

The 188-residue stretch at 82–269 (KLHGDLDVSV…CELNFGAYPF (188 aa)) folds into the B30.2/SPRY domain. A helical transmembrane segment spans residues 551-571 (SVLVSLFSVILHFLSEGFAML). The interval 669–719 (DRGKNTAQSSRGRCSSIPERSSHVAAECSAGSFSEEIDDKPSTSNQSDPDF) is disordered. A helical transmembrane segment spans residues 834–854 (ALCMWVVQLLLVLSKMDSVFV). The RING-type zinc-finger motif lies at 1217–1252 (CCICYAGEANAMIAPCSHRSCYGCITRHLLNCQRCF).

The protein resides in the membrane. The catalysed reaction is S-ubiquitinyl-[E2 ubiquitin-conjugating enzyme]-L-cysteine + [acceptor protein]-L-lysine = [E2 ubiquitin-conjugating enzyme]-L-cysteine + N(6)-ubiquitinyl-[acceptor protein]-L-lysine.. Functionally, E3 ubiquitin-protein ligase that promotes the ubiquitination and proteasomal degradation of KRP1 and KRP2. This chain is E3 ubiquitin-protein ligase RKP (RKP), found in Arabidopsis thaliana (Mouse-ear cress).